A 403-amino-acid polypeptide reads, in one-letter code: Metacaspase-7 (403 aa).

Active-site residues include His86 and Cys139. At Cys139 the chain carries S-nitrosocysteine.

Belongs to the peptidase C14B family. Proteolytically processed; by an autocatalytic mechanism. Expressed in roots, flowers and siliques.

The polypeptide is Metacaspase-7 (AMC7) (Arabidopsis thaliana (Mouse-ear cress)).